A 940-amino-acid polypeptide reads, in one-letter code: Insulin receptor substrate 1 (940 aa).

The 102-residue stretch at 8–109 (GMVLSGYHKK…WLDKLLLLQR (102 aa)) folds into the PH domain. Residues 122–236 (YEHVWQVIIQ…SAMSAKTDSN (115 aa)) form the IRS-type PTB domain. 3 positions are modified to phosphoserine: S284, S285, and S340. Position 407 is a phosphotyrosine; by INSR (Y407). The YXXM motif 1 signature appears at 407–410 (YIPM). The span at 523 to 540 (NRSQNNISKEGPISGTST) shows a compositional bias: polar residues. The disordered stretch occupies residues 523-549 (NRSQNNISKEGPISGTSTNREKKSTSA). At S548 the chain carries Phosphoserine. Positions 639–642 (YLEM) match the YXXM motif 2 motif. At Y883 the chain carries Phosphotyrosine; by INSR. The interval 895–915 (NPAKYLKRGSRESPPVATCAE) is disordered. S904 and S907 each carry phosphoserine. Y920 is modified (phosphotyrosine; by INSR).

In terms of assembly, bindings to phosphatidylinositol 3-kinase and SHP2.

In terms of biological role, activates phosphatidylinositol 3-kinase when bound to the regulatory p85 subunit. May mediate the control of various cellular processes by insulin-like peptides. When phosphorylated by the insulin receptor binds specifically to various cellular proteins containing SH2 domains. Involved in control of cell proliferation, cell size, and body and organ growth throughout development. Also has a role in a signaling pathway controlling the physiological response required to endure periods of low nutrient conditions. Insulin/insulin-like growth factor (IGF) signaling pathway has a role in regulating aging and is necessary in the ovary for vitellogenic maturation. This chain is Insulin receptor substrate 1, found in Drosophila ananassae (Fruit fly).